The chain runs to 122 residues: Large ribosomal subunit protein uL14 (122 aa).

Belongs to the universal ribosomal protein uL14 family. In terms of assembly, part of the 50S ribosomal subunit. Forms a cluster with proteins L3 and L19. In the 70S ribosome, L14 and L19 interact and together make contacts with the 16S rRNA in bridges B5 and B8.

Binds to 23S rRNA. Forms part of two intersubunit bridges in the 70S ribosome. The sequence is that of Large ribosomal subunit protein uL14 from Marinomonas sp. (strain MWYL1).